The chain runs to 193 residues: Penicillin-binding protein activator LpoB (193 aa).

A signal peptide spans 1–16 (MKRYLSVALAALVLTG). C17 carries N-palmitoyl cysteine lipidation. The S-diacylglycerol cysteine moiety is linked to residue C17. Positions 24–55 (EPTTPPVTIEPVTPPVPETPPPVDNVPPPPKM) are disordered. Over residues 35–54 (VTPPVPETPPPVDNVPPPPK) the composition is skewed to pro residues.

Belongs to the LpoB family. As to quaternary structure, interacts with PBP1b.

It localises to the cell outer membrane. In terms of biological role, regulator of peptidoglycan synthesis that is essential for the function of penicillin-binding protein 1B (PBP1b). The polypeptide is Penicillin-binding protein activator LpoB (Yersinia enterocolitica serotype O:8 / biotype 1B (strain NCTC 13174 / 8081)).